Reading from the N-terminus, the 264-residue chain is Acetyl-coenzyme A carboxylase carboxyl transferase subunit beta (264 aa).

Positions 4–264 (LWVKCKQCQQ…CGNSLEGVES (261 aa)) constitute a CoA carboxyltransferase N-terminal domain. Residues Cys-8, Cys-11, Cys-27, and Cys-29 each contribute to the Zn(2+) site. A C4-type zinc finger spans residues 8–29 (CKQCQQILLTKELEKNLKVCRC).

Belongs to the AccD/PCCB family. As to quaternary structure, acetyl-CoA carboxylase is a heterohexamer composed of biotin carboxyl carrier protein (AccB), biotin carboxylase (AccC) and two subunits each of ACCase subunit alpha (AccA) and ACCase subunit beta (AccD). Zn(2+) serves as cofactor.

Its subcellular location is the cytoplasm. It catalyses the reaction N(6)-carboxybiotinyl-L-lysyl-[protein] + acetyl-CoA = N(6)-biotinyl-L-lysyl-[protein] + malonyl-CoA. Its pathway is lipid metabolism; malonyl-CoA biosynthesis; malonyl-CoA from acetyl-CoA: step 1/1. Functionally, component of the acetyl coenzyme A carboxylase (ACC) complex. Biotin carboxylase (BC) catalyzes the carboxylation of biotin on its carrier protein (BCCP) and then the CO(2) group is transferred by the transcarboxylase to acetyl-CoA to form malonyl-CoA. The chain is Acetyl-coenzyme A carboxylase carboxyl transferase subunit beta from Heliobacterium modesticaldum (strain ATCC 51547 / Ice1).